A 671-amino-acid chain; its full sequence is Amidase chry2 (671 aa).

Cys2 acts as the Nucleophile in catalysis. The Glutamine amidotransferase type-2 domain occupies 2–220 (CGISAFITHP…PGHYLICRPN (219 aa)). Residues 251–639 (VRERLLEAVR…TQDAMDGAFN (389 aa)) enclose the Asparagine synthetase domain.

It belongs to the asparagine synthetase family.

Its pathway is pigment biosynthesis. Functionally, amidase; part of the gene cluster that mediates the biosynthesis of the yellow pigment chrysogine. Pyruvic acid and anthranilic acid are likely substrates for the nonribosomal peptide synthetase chry1/NRPS14, with pyruvic acid adenylated by the first A domain and anthranilic acid by the second. If pyruvic acid and anthranilic acid are merged and released from chry1/NRPS14 by hydrolysis, a subsequent amidation would lead to 2-pyruvoylaminobenzamide. This process is probably catalyzed by the amidotransferase chry2 using glutamine as amino donor. The dehydrogenase chry5 that has a terminal berberine bridge domain for C-N cyclization could catalyze the cyclization of 2-pyruvoylaminobenzamide to yield acetyl-4(3H)-quinazolidinone. A final reduction of acetyl-4(3H)-quinazolidinone catalyzed by the oxidoreductase chry4 would result in chrysogine. This chain is Amidase chry2, found in Gibberella zeae (strain ATCC MYA-4620 / CBS 123657 / FGSC 9075 / NRRL 31084 / PH-1) (Wheat head blight fungus).